We begin with the raw amino-acid sequence, 185 residues long: MEEQEEKQYNQNIQDNEEGTQMREELQESTSAQQTLQEQEIDYQAKYLELKDQYVRAFADFENTKKRLERDKNQSLEYAYERIMNDLLPVLDTLEKALESAQSNPEAGAIAQGLQLTLEGFLKVLSKHGVEVIATDGEFDPNLHECLMQVPDANKNDGEILQTLQKGFVYKHRVLRPSMVSVVKN.

The interval 1–37 is disordered; that stretch reads MEEQEEKQYNQNIQDNEEGTQMREELQESTSAQQTLQ. The span at 28-37 shows a compositional bias: polar residues; it reads ESTSAQQTLQ.

This sequence belongs to the GrpE family. In terms of assembly, homodimer.

The protein localises to the cytoplasm. Functionally, participates actively in the response to hyperosmotic and heat shock by preventing the aggregation of stress-denatured proteins, in association with DnaK and GrpE. It is the nucleotide exchange factor for DnaK and may function as a thermosensor. Unfolded proteins bind initially to DnaJ; upon interaction with the DnaJ-bound protein, DnaK hydrolyzes its bound ATP, resulting in the formation of a stable complex. GrpE releases ADP from DnaK; ATP binding to DnaK triggers the release of the substrate protein, thus completing the reaction cycle. Several rounds of ATP-dependent interactions between DnaJ, DnaK and GrpE are required for fully efficient folding. This is Protein GrpE from Helicobacter hepaticus (strain ATCC 51449 / 3B1).